The primary structure comprises 183 residues: Lipid droplet coating protein Cap20 (183 aa).

The protein belongs to the perilipin family.

It is found in the lipid droplet. Lipid droplet coating protein that regulates lipid metabolism, appressorial turgor pressure, and virulence. Appressorial turgor pressure is important for the mechanical penetration of the host cuticle during infection. In Colletotrichum gloeosporioides (Anthracnose fungus), this protein is Lipid droplet coating protein Cap20 (Cap20).